A 183-amino-acid chain; its full sequence is Large ribosomal subunit protein bL17 (183 aa).

Residues 130–150 show a composition bias toward basic and acidic residues; it reads GTKFAKDEKAKAEATEAKAEE. Residues 130-183 form a disordered region; sequence GTKFAKDEKAKAEATEAKAEETTETTESTEAESTEAPAEEAKAEDTAAEKKDES. A compositionally biased stretch (acidic residues) spans 151–162; it reads TTETTESTEAES. Positions 168 to 183 are enriched in basic and acidic residues; that stretch reads EEAKAEDTAAEKKDES.

This sequence belongs to the bacterial ribosomal protein bL17 family. Part of the 50S ribosomal subunit. Contacts protein L32.

The chain is Large ribosomal subunit protein bL17 from Saccharopolyspora erythraea (strain ATCC 11635 / DSM 40517 / JCM 4748 / NBRC 13426 / NCIMB 8594 / NRRL 2338).